The primary structure comprises 695 residues: Protein MALE DISCOVERER 1 (695 aa).

The first 29 residues, 1–29, serve as a signal peptide directing secretion; the sequence is MGCRWNPIGFQFSCFMFLIITLQSRSSLS. Over 30–340 the chain is Extracellular; it reads LESEGFVLLK…SKGFKDVWLY (311 aa). Residues asparagine 56 and asparagine 80 are each glycosylated (N-linked (GlcNAc...) asparagine). 4 LRR repeats span residues 75–98, 99–121, 123–144, and 147–168; these read KVQM…SQLS, ELRS…FASF, KLEF…ELNK, and TPEN…KFLR. Asparagine 247 is a glycosylation site (N-linked (GlcNAc...) asparagine). The tract at residues 302-325 is disordered; that stretch reads PPLIPPSSPPPLPTNNTIASDPPR. Residues 303–314 show a composition bias toward pro residues; sequence PLIPPSSPPPLP. Residue asparagine 316 is glycosylated (N-linked (GlcNAc...) asparagine). Residues 341 to 361 form a helical membrane-spanning segment; the sequence is VVIGVAAFVAMLIIVAVIFFF. Residues 362–695 lie on the Cytoplasmic side of the membrane; the sequence is RKRAVKSIGP…ELEILSSEAT (334 aa). The Protein kinase domain occupies 363–668; that stretch reads KRAVKSIGPW…YVVQQLKEVI (306 aa). Serine 652 is subject to Phosphoserine.

The protein belongs to the protein kinase superfamily. Ser/Thr protein kinase family. In terms of assembly, homodimer. Interacts with MIK1, MIK2 and LURE1.2. LURE1.2 enhances the heterodimerization of MDIS1 with MIK1 or MIK2. Post-translationally, phosphorylated by MIK1. In terms of tissue distribution, expressed in pollen tubes and seedlings.

Its subcellular location is the cell membrane. It is found in the endomembrane system. It catalyses the reaction L-seryl-[protein] + ATP = O-phospho-L-seryl-[protein] + ADP + H(+). The catalysed reaction is L-threonyl-[protein] + ATP = O-phospho-L-threonyl-[protein] + ADP + H(+). Its function is as follows. Involved in the pollen tube perception of the female signal. The chain is Protein MALE DISCOVERER 1 from Arabidopsis thaliana (Mouse-ear cress).